The following is a 175-amino-acid chain: Archaemetzincin (175 aa).

His-125 serves as a coordination point for Zn(2+). Glu-126 serves as the catalytic Proton acceptor. Residues His-129, His-135, Cys-136, Cys-141, Cys-160, and Cys-163 each coordinate Zn(2+).

This sequence belongs to the peptidase M54 family. As to quaternary structure, monomer. Requires Zn(2+) as cofactor.

In terms of biological role, probable zinc metalloprotease whose natural substrate is unknown. Does not show endo- or exopeptidase activity against resorufin labeled casein, p-nitroanilide (pNA), amidomethylcoumarin (AMC) (one to three amino acids in length), and hippuryl-aminoacid substrates. This Methanopyrus kandleri (strain AV19 / DSM 6324 / JCM 9639 / NBRC 100938) protein is Archaemetzincin.